A 691-amino-acid chain; its full sequence is Elongation factor G (691 aa).

In terms of domain architecture, tr-type G spans 8 to 282 (ERVRNIGIAA…AVVDYLPAPV (275 aa)). GTP is bound by residues 17–24 (AHIDAGKT), 81–85 (DTPGH), and 135–138 (NKMD).

Belongs to the TRAFAC class translation factor GTPase superfamily. Classic translation factor GTPase family. EF-G/EF-2 subfamily.

The protein localises to the cytoplasm. In terms of biological role, catalyzes the GTP-dependent ribosomal translocation step during translation elongation. During this step, the ribosome changes from the pre-translocational (PRE) to the post-translocational (POST) state as the newly formed A-site-bound peptidyl-tRNA and P-site-bound deacylated tRNA move to the P and E sites, respectively. Catalyzes the coordinated movement of the two tRNA molecules, the mRNA and conformational changes in the ribosome. The sequence is that of Elongation factor G from Prochlorococcus marinus (strain MIT 9211).